We begin with the raw amino-acid sequence, 145 residues long: 3-hydroxyacyl-[acyl-carrier-protein] dehydratase FabZ (145 aa).

The active site involves H49.

This sequence belongs to the thioester dehydratase family. FabZ subfamily.

The protein localises to the cytoplasm. The catalysed reaction is a (3R)-hydroxyacyl-[ACP] = a (2E)-enoyl-[ACP] + H2O. In terms of biological role, involved in unsaturated fatty acids biosynthesis. Catalyzes the dehydration of short chain beta-hydroxyacyl-ACPs and long chain saturated and unsaturated beta-hydroxyacyl-ACPs. This Rickettsia peacockii (strain Rustic) protein is 3-hydroxyacyl-[acyl-carrier-protein] dehydratase FabZ.